The chain runs to 306 residues: ATP phosphoribosyltransferase (306 aa).

The protein belongs to the ATP phosphoribosyltransferase family.

Its subcellular location is the cytoplasm. It catalyses the reaction 1-(5-phospho-beta-D-ribosyl)-ATP + diphosphate = 5-phospho-alpha-D-ribose 1-diphosphate + ATP. Its pathway is amino-acid biosynthesis; L-histidine biosynthesis; L-histidine from 5-phospho-alpha-D-ribose 1-diphosphate: step 1/9. Functionally, catalyzes the condensation of ATP and 5-phosphoribose 1-diphosphate to form N'-(5'-phosphoribosyl)-ATP (PR-ATP). Has a crucial role in the pathway because the rate of histidine biosynthesis seems to be controlled primarily by regulation of the enzymatic activity. This Candida glabrata (strain ATCC 2001 / BCRC 20586 / JCM 3761 / NBRC 0622 / NRRL Y-65 / CBS 138) (Yeast) protein is ATP phosphoribosyltransferase (HIS1).